Reading from the N-terminus, the 274-residue chain is Dermonecrotic toxin SdSicTox-betaIIB1aii (274 aa).

His5 is a catalytic residue. The Mg(2+) site is built by Glu25 and Asp27. His41 functions as the Nucleophile in the catalytic mechanism. 2 cysteine pairs are disulfide-bonded: Cys45–Cys51 and Cys47–Cys190. Asp85 contributes to the Mg(2+) binding site.

This sequence belongs to the arthropod phospholipase D family. Class II subfamily. Mg(2+) is required as a cofactor. In terms of tissue distribution, expressed by the venom gland.

The protein resides in the secreted. It catalyses the reaction an N-(acyl)-sphingosylphosphocholine = an N-(acyl)-sphingosyl-1,3-cyclic phosphate + choline. It carries out the reaction an N-(acyl)-sphingosylphosphoethanolamine = an N-(acyl)-sphingosyl-1,3-cyclic phosphate + ethanolamine. The catalysed reaction is a 1-acyl-sn-glycero-3-phosphocholine = a 1-acyl-sn-glycero-2,3-cyclic phosphate + choline. The enzyme catalyses a 1-acyl-sn-glycero-3-phosphoethanolamine = a 1-acyl-sn-glycero-2,3-cyclic phosphate + ethanolamine. Dermonecrotic toxins cleave the phosphodiester linkage between the phosphate and headgroup of certain phospholipids (sphingolipid and lysolipid substrates), forming an alcohol (often choline) and a cyclic phosphate. This toxin acts on sphingomyelin (SM). It may also act on ceramide phosphoethanolamine (CPE), lysophosphatidylcholine (LPC) and lysophosphatidylethanolamine (LPE), but not on lysophosphatidylserine (LPS), and lysophosphatidylglycerol (LPG). It acts by transphosphatidylation, releasing exclusively cyclic phosphate products as second products. Induces dermonecrosis, hemolysis, increased vascular permeability, edema, inflammatory response, and platelet aggregation. This Sicarius cf. damarensis (strain GJB-2008) (Six-eyed sand spider) protein is Dermonecrotic toxin SdSicTox-betaIIB1aii.